We begin with the raw amino-acid sequence, 386 residues long: Homoserine O-succinyltransferase (386 aa).

One can recognise an AB hydrolase-1 domain in the interval 49 to 358; it reads NAILICHALS…DAEQGHDSFL (310 aa). The active-site Nucleophile is the serine 156. Residue arginine 226 participates in substrate binding. Active-site residues include aspartate 321 and histidine 354. Residue aspartate 355 participates in substrate binding.

It belongs to the AB hydrolase superfamily. MetX family. Homodimer.

The protein localises to the cytoplasm. It catalyses the reaction L-homoserine + succinyl-CoA = O-succinyl-L-homoserine + CoA. It functions in the pathway amino-acid biosynthesis; L-methionine biosynthesis via de novo pathway; O-succinyl-L-homoserine from L-homoserine: step 1/1. In terms of biological role, transfers a succinyl group from succinyl-CoA to L-homoserine, forming succinyl-L-homoserine. The chain is Homoserine O-succinyltransferase from Acinetobacter baumannii (strain ACICU).